A 371-amino-acid chain; its full sequence is F-box protein At2g41170 (371 aa).

The region spanning 56-102 is the F-box domain; that stretch reads KMSLLDLPDLTLDCILEKLSPSELCAMTSVCSELRDKCVSDHLWEKH.

This is F-box protein At2g41170 from Arabidopsis thaliana (Mouse-ear cress).